Consider the following 285-residue polypeptide: V-type proton ATPase subunit D (285 aa).

Positions 208–226 are enriched in basic and acidic residues; that stretch reads QKTKENAEKADSVTKEEHQ. A disordered region spans residues 208–285; sequence QKTKENAEKA…ENDSDEEVIF (78 aa). Ser219 carries the phosphoserine modification. The span at 227 to 236 shows a compositional bias: polar residues; it reads GGSNTLQQTK. The span at 248 to 263 shows a compositional bias: basic and acidic residues; it reads VGKEVINEVENSKDDT. Over residues 271–285 the composition is skewed to acidic residues; that stretch reads TDDEEENDSDEEVIF.

Belongs to the V-ATPase D subunit family. V-ATPase is a heteromultimeric enzyme composed of a peripheral catalytic V1 complex (components A to H) attached to an integral membrane V0 proton pore complex (components: a, c, c', c'', d, e, f and VOA1).

The protein resides in the vacuole membrane. In terms of biological role, subunit of the V1 complex of vacuolar(H+)-ATPase (V-ATPase), a multisubunit enzyme composed of a peripheral complex (V1) that hydrolyzes ATP and a membrane integral complex (V0) that translocates protons. V-ATPase is responsible for acidifying and maintaining the pH of intracellular compartments. The sequence is that of V-type proton ATPase subunit D (vma8) from Schizosaccharomyces pombe (strain 972 / ATCC 24843) (Fission yeast).